A 171-amino-acid polypeptide reads, in one-letter code: Ribosome maturation factor RimM (171 aa).

Positions 97–169 (DGEFYYHEII…RVDVDIMEGL (73 aa)) constitute a PRC barrel domain.

It belongs to the RimM family. In terms of assembly, binds ribosomal protein uS19.

Its subcellular location is the cytoplasm. An accessory protein needed during the final step in the assembly of 30S ribosomal subunit, possibly for assembly of the head region. Essential for efficient processing of 16S rRNA. May be needed both before and after RbfA during the maturation of 16S rRNA. It has affinity for free ribosomal 30S subunits but not for 70S ribosomes. This chain is Ribosome maturation factor RimM, found in Lactococcus lactis subsp. cremoris (strain MG1363).